A 323-amino-acid chain; its full sequence is Low affinity immunoglobulin gamma Fc region receptor II-c (323 aa).

Positions 1-42 (MGILSFLPVLATESDWADCKSPQPWGHMLLWTAVLFLAPVAG) are cleaved as a signal peptide. Over 43–223 (TPAAPPKAVL…VQAPSSSPMG (181 aa)) the chain is Extracellular. Ig-like C2-type domains follow at residues 48–127 (PKAV…VHLT) and 131–213 (EWLV…VTIT). 2 disulfides stabilise this stretch: Cys-71–Cys-113 and Cys-152–Cys-196. Residues Asn-106, Asn-180, and Asn-187 are each glycosylated (N-linked (GlcNAc...) asparagine). Residues 224–246 (IIVAVVTGIAVAAIVAAVVALIY) traverse the membrane as a helical segment. Over 247–323 (CRKKRISANS…PPNDHVNSNN (77 aa)) the chain is Cytoplasmic. Residues 277–323 (KRQPEETNNDYETADGGYMTLNPRAPTDDDKNIYLTLPPNDHVNSNN) are disordered. A phosphotyrosine; by SRC-type Tyr-kinases mark is found at Tyr-294 and Tyr-310.

Post-translationally, phosphorylated by SRC-type Tyr-kinases such as LYN, BLK, FYN and SYK. In terms of tissue distribution, isoform IIC1 is detected in monocytes, macrophages, polymorphonuclear cells and natural killer cells.

The protein resides in the cytoplasm. The protein localises to the cell membrane. Functionally, receptor for the Fc region of complexed immunoglobulins gamma. Low affinity receptor. Involved in a variety of effector and regulatory functions such as phagocytosis of immune complexes and modulation of antibody production by B-cells. The sequence is that of Low affinity immunoglobulin gamma Fc region receptor II-c (FCGR2C) from Homo sapiens (Human).